We begin with the raw amino-acid sequence, 370 residues long: NADH-quinone oxidoreductase subunit D 2 (370 aa).

It belongs to the complex I 49 kDa subunit family. In terms of assembly, NDH-1 is composed of 14 different subunits. Subunits NuoB, C, D, E, F, and G constitute the peripheral sector of the complex.

It is found in the cell inner membrane. It catalyses the reaction a quinone + NADH + 5 H(+)(in) = a quinol + NAD(+) + 4 H(+)(out). NDH-1 shuttles electrons from NADH, via FMN and iron-sulfur (Fe-S) centers, to quinones in the respiratory chain. The immediate electron acceptor for the enzyme in this species is believed to be ubiquinone. Couples the redox reaction to proton translocation (for every two electrons transferred, four hydrogen ions are translocated across the cytoplasmic membrane), and thus conserves the redox energy in a proton gradient. In Solibacter usitatus (strain Ellin6076), this protein is NADH-quinone oxidoreductase subunit D 2.